The chain runs to 477 residues: UDP-N-acetylmuramate--L-alanine ligase (477 aa).

112–118 (GTHGKTT) is an ATP binding site.

Belongs to the MurCDEF family.

Its subcellular location is the cytoplasm. It carries out the reaction UDP-N-acetyl-alpha-D-muramate + L-alanine + ATP = UDP-N-acetyl-alpha-D-muramoyl-L-alanine + ADP + phosphate + H(+). Its pathway is cell wall biogenesis; peptidoglycan biosynthesis. Functionally, cell wall formation. The protein is UDP-N-acetylmuramate--L-alanine ligase of Verminephrobacter eiseniae (strain EF01-2).